A 697-amino-acid chain; its full sequence is Zinc finger and BTB domain-containing protein 24 (697 aa).

Residues 10–133 enclose the BTB domain; the sequence is GQLVVHSDAH…AYTDFQNNHS (124 aa). The segment covering 131–142 has biased composition (polar residues); that stretch reads NHSSPKPTTLNT. Disordered regions lie at residues 131–176 and 209–254; these read NHSS…EEKS and EQIA…SRYS. Positions 159–171 form a DNA-binding region, a.T hook; it reads KRKRGRPKKVNTL. Basic and acidic residues predominate over residues 212 to 245; sequence AAKEKEESEPTCEPSREEEMPVEKDENYDPKTED. 8 C2H2-type zinc fingers span residues 294–316, 322–344, 350–372, 378–400, 406–428, 434–456, 462–484, and 490–512; these read ARCKDCGKVFKYNHFLAIHQRSH, FKCNECGKGFAQKHSLQVHTRMH, YTCTVCSKALTTKHSLLEHMSLH, FTCDQCGKYFSQNRQLKSHYRVH, PECKDCHRKFMDVSQLKKHLRTH, FTCEICGKSFTAKSSLQTHIRIH, YSCGICGKSFSDSSAKRRHCILH, and FSCPECNLQFARLDNLKAHLKIH. A disordered region spans residues 652–697; the sequence is QEQTEELHLATSTSDPAQHLQLTQEPGPPPPTHHVPQPTPLGQEQS. Residues 677 to 690 are compositionally biased toward pro residues; that stretch reads PGPPPPTHHVPQPT.

The protein belongs to the krueppel C2H2-type zinc-finger protein family. As to quaternary structure, interacts with MN1. In terms of tissue distribution, widely expressed, with highest levels in naive B-cells.

The protein localises to the nucleus. Its function is as follows. May be involved in BMP2-induced transcription. In Homo sapiens (Human), this protein is Zinc finger and BTB domain-containing protein 24 (ZBTB24).